The following is a 226-amino-acid chain: Ribonuclease 3 (226 aa).

The RNase III domain occupies 6-128 (INRLQRKLGY…LIGGIFLDSD (123 aa)). Mg(2+) is bound at residue Glu-41. Asp-45 is a catalytic residue. Positions 114 and 117 each coordinate Mg(2+). Glu-117 is an active-site residue. Residues 155–225 (DPKTRLQEFL…AEQALKQLEL (71 aa)) form the DRBM domain.

It belongs to the ribonuclease III family. As to quaternary structure, homodimer. Requires Mg(2+) as cofactor.

It localises to the cytoplasm. It catalyses the reaction Endonucleolytic cleavage to 5'-phosphomonoester.. Its function is as follows. Digests double-stranded RNA. Involved in the processing of primary rRNA transcript to yield the immediate precursors to the large and small rRNAs (23S and 16S). Processes some mRNAs, and tRNAs when they are encoded in the rRNA operon. Processes pre-crRNA and tracrRNA of type II CRISPR loci if present in the organism. In Edwardsiella ictaluri (strain 93-146), this protein is Ribonuclease 3.